The following is a 380-amino-acid chain: Lipid-A-disaccharide synthase (380 aa).

The protein belongs to the LpxB family.

It carries out the reaction a lipid X + a UDP-2-N,3-O-bis[(3R)-3-hydroxyacyl]-alpha-D-glucosamine = a lipid A disaccharide + UDP + H(+). It participates in bacterial outer membrane biogenesis; LPS lipid A biosynthesis. Functionally, condensation of UDP-2,3-diacylglucosamine and 2,3-diacylglucosamine-1-phosphate to form lipid A disaccharide, a precursor of lipid A, a phosphorylated glycolipid that anchors the lipopolysaccharide to the outer membrane of the cell. In Vibrio vulnificus (strain CMCP6), this protein is Lipid-A-disaccharide synthase.